A 384-amino-acid chain; its full sequence is Cytochrome b (384 aa).

4 consecutive transmembrane segments (helical) span residues 32-52, 76-98, 113-133, and 179-199; these read FGFL…FLAI, WLLR…IHIS, TWVV…MGYV, and FFSF…VHMA. Positions 82 and 96 each coordinate heme b. Heme b is bound by residues H183 and H197. H202 serves as a coordination point for a ubiquinone. Transmembrane regions (helical) follow at residues 225 to 245, 289 to 309, 321 to 341, and 348 to 368; these read FIIK…LFVY, LGGV…PWIT, LYKK…WIGG, and YVVI…IFIP.

The protein belongs to the cytochrome b family. The main subunits of complex b-c1 are: cytochrome b, cytochrome c1 and the Rieske protein. Heme b is required as a cofactor.

Its subcellular location is the mitochondrion inner membrane. In terms of biological role, component of the ubiquinol-cytochrome c reductase complex (complex III or cytochrome b-c1 complex) that is part of the mitochondrial respiratory chain. The b-c1 complex mediates electron transfer from ubiquinol to cytochrome c. Contributes to the generation of a proton gradient across the mitochondrial membrane that is then used for ATP synthesis. The sequence is that of Cytochrome b (MT-CYB) from Cyanidium caldarium (Red alga).